A 408-amino-acid polypeptide reads, in one-letter code: Probable pectate lyase 5 (408 aa).

The first 27 residues, 1-27 (MRMTLVHLSLSLFSCLLLVLSPTFIAS), serve as a signal peptide directing secretion. N45 carries N-linked (GlcNAc...) asparagine glycosylation. Residues D206, D230, and D234 each coordinate Ca(2+). R286 is an active-site residue.

It belongs to the polysaccharide lyase 1 family. The cofactor is Ca(2+).

It carries out the reaction Eliminative cleavage of (1-&gt;4)-alpha-D-galacturonan to give oligosaccharides with 4-deoxy-alpha-D-galact-4-enuronosyl groups at their non-reducing ends.. It participates in glycan metabolism; pectin degradation; 2-dehydro-3-deoxy-D-gluconate from pectin: step 2/5. This Arabidopsis thaliana (Mouse-ear cress) protein is Probable pectate lyase 5.